The chain runs to 295 residues: Small ribosomal subunit protein uS2 (295 aa).

Residues 247 to 295 (TDKGLTSKNVSKLKQTKKFSKTKNIDEETNTEFEQALNDADENKNSDNA) form a disordered region.

Belongs to the universal ribosomal protein uS2 family.

This Rickettsia conorii (strain ATCC VR-613 / Malish 7) protein is Small ribosomal subunit protein uS2.